The chain runs to 160 residues: Major strawberry allergen Fra a 1-2 (160 aa).

Belongs to the BetVI family. As to quaternary structure, monomer. Interacts with AP. As to expression, highly expressed in ripe red fruits. Expressed in roots and white fruits. Expressed at low levels in open flowers.

In terms of biological role, involved in the control of flavonoid biosynthesis in fruits, probably by binding directly to natural flavonoids. Binds the natural flavonoid myricetin with affinities in the low micromolar range. This is Major strawberry allergen Fra a 1-2 from Fragaria ananassa (Strawberry).